The sequence spans 598 residues: Glutamine--fructose-6-phosphate aminotransferase [isomerizing] (598 aa).

C2 (nucleophile; for GATase activity) is an active-site residue. The 217-residue stretch at 2-218 folds into the Glutamine amidotransferase type-2 domain; the sequence is CGIVGYIGNN…DLSLGYASKD (217 aa). SIS domains are found at residues 277–421 and 450–588; these read VFDE…KRNL and LSKR…VDMP. K593 (for Fru-6P isomerization activity) is an active-site residue.

As to quaternary structure, homodimer.

Its subcellular location is the cytoplasm. The enzyme catalyses D-fructose 6-phosphate + L-glutamine = D-glucosamine 6-phosphate + L-glutamate. Its function is as follows. Catalyzes the first step in hexosamine metabolism, converting fructose-6P into glucosamine-6P using glutamine as a nitrogen source. The polypeptide is Glutamine--fructose-6-phosphate aminotransferase [isomerizing] (Campylobacter jejuni subsp. jejuni serotype O:2 (strain ATCC 700819 / NCTC 11168)).